The primary structure comprises 105 residues: Guanidinium exporter (105 aa).

A topological domain (cytoplasmic) is located at residue Met-1. Residues 2-19 traverse the membrane as a helical segment; the sequence is SWIVLLIAGLLEVVWAIG. Residues 20–28 lie on the Periplasmic side of the membrane; that stretch reads LKYTHGFTR. A helical transmembrane segment spans residues 29–48; sequence LTPSIITIAAMIVSIAMLSW. Residues 49-54 are Cytoplasmic-facing; that stretch reads AMRTLP. The chain crosses the membrane as a helical span at residues 55-77; it reads VGTAYAVWTGIGAVGAAITGILL. Over 78 to 86 the chain is Periplasmic; it reads LGESASPAR. Residues 87 to 104 form a helical membrane-spanning segment; it reads LLSLGLIVAGIIGLKLST. Residue His-105 is a topological domain, cytoplasmic.

This sequence belongs to the drug/metabolite transporter (DMT) superfamily. Small multidrug resistance (SMR) (TC 2.A.7.1) family. Gdx/SugE subfamily.

It is found in the cell inner membrane. In terms of biological role, guanidinium ion exporter. Couples guanidinium export to the proton motive force, exchanging one guanidinium ion for two protons. This Citrobacter freundii protein is Guanidinium exporter.